Here is a 218-residue protein sequence, read N- to C-terminus: Probable GTP-binding protein EngB (218 aa).

Residues 31–205 (SGIEIAFAGR…EQKVTSWYAQ (175 aa)) enclose the EngB-type G domain. GTP contacts are provided by residues 39-46 (GRSNAGKS), 66-70 (GRTQL), 84-87 (DLPG), 151-154 (TKAD), and 184-186 (FSS). Mg(2+) contacts are provided by Ser46 and Thr68.

Belongs to the TRAFAC class TrmE-Era-EngA-EngB-Septin-like GTPase superfamily. EngB GTPase family. The cofactor is Mg(2+).

In terms of biological role, necessary for normal cell division and for the maintenance of normal septation. This chain is Probable GTP-binding protein EngB, found in Psychromonas ingrahamii (strain DSM 17664 / CCUG 51855 / 37).